The sequence spans 145 residues: Small ribosomal subunit protein eS19 (145 aa).

Belongs to the eukaryotic ribosomal protein eS19 family. In terms of assembly, component of the small ribosomal subunit.

It is found in the cytoplasm. The protein resides in the nucleus. Its function is as follows. Component of the small ribosomal subunit. The ribosome is a large ribonucleoprotein complex responsible for the synthesis of proteins in the cell. Required for pre-rRNA processing and maturation of 40S ribosomal subunits. This is Small ribosomal subunit protein eS19 (rps19) from Myxine glutinosa (Atlantic hagfish).